The chain runs to 201 residues: B-cell CLL/lymphoma 7 protein family member A (201 aa).

The interval 46–201 (YKWVPVTEPK…GKIDSSSEES (156 aa)) is disordered. Over residues 54–71 (PKSDDNKNKKKGKDDKYG) the composition is skewed to basic and acidic residues. Composition is skewed to polar residues over residues 73-83 (EVTTPENSSSP), 93-114 (SNQS…NTSP), and 133-142 (QYPSKQPSSG). Positions 158–167 (TSKRDSKSQG) are enriched in basic and acidic residues. The segment covering 168-179 (DSESFLDSSKSA) has biased composition (polar residues). Over residues 192 to 201 (GKIDSSSEES) the composition is skewed to basic and acidic residues.

It belongs to the BCL7 family.

This chain is B-cell CLL/lymphoma 7 protein family member A (bcl7a), found in Danio rerio (Zebrafish).